A 1025-amino-acid chain; its full sequence is Dihydropyrimidine dehydrogenase [NADP(+)] (1025 aa).

The 32-residue stretch at 69–100 (ERGALREAMRCLKCADAPCQKSCPTNLDIKSF) folds into the 4Fe-4S ferredoxin-type 1 domain. Residues C79, C82, C87, and C91 each contribute to the [4Fe-4S] cluster site. V129 is an FAD binding site. 4 residues coordinate [4Fe-4S] cluster: C130, C136, C140, and Q156. Residues 194 to 198 (GAGPA), 218 to 226 (EKQEYVGGI), R235, and L261 each bind FAD. NADP(+) is bound by residues 340 to 343 (AGDT), 364 to 365 (RK), and R371. K384 carries the N6-acetyllysine modification. NADP(+)-binding positions include 437 to 439 (AFG) and 481 to 487 (DVVGIAN). 480–489 (GDVVGIANTT) serves as a coordination point for FAD. Residues S550 and 574–575 (KT) contribute to the FMN site. Residues N609 and 668-670 (NLS) each bind substrate. C671 (proton acceptor) is an active-site residue. Residue K709 participates in FMN binding. 736–737 (NT) serves as a coordination point for substrate. Residues G767, 793–795 (TGG), and 816–817 (CS) contribute to the FMN site. 2 consecutive 4Fe-4S ferredoxin-type domains span residues 944–976 (VVAV…FDPE) and 978–1007 (HLPT…MVSR). Residues C953, C956, C959, C963, C986, C989, C992, and C996 each coordinate [4Fe-4S] cluster.

It belongs to the dihydropyrimidine dehydrogenase family. Homodimer. FAD is required as a cofactor. Requires FMN as cofactor. [4Fe-4S] cluster serves as cofactor.

It is found in the cytoplasm. It catalyses the reaction 5,6-dihydrouracil + NADP(+) = uracil + NADPH + H(+). The catalysed reaction is 5,6-dihydrothymine + NADP(+) = thymine + NADPH + H(+). The protein operates within amino-acid biosynthesis; beta-alanine biosynthesis. Inactivated by 5-iodouracil. Involved in pyrimidine base degradation. Catalyzes the reduction of uracil and thymine. Also involved the degradation of the chemotherapeutic drug 5-fluorouracil. The polypeptide is Dihydropyrimidine dehydrogenase [NADP(+)] (DPYD) (Bos taurus (Bovine)).